Here is a 286-residue protein sequence, read N- to C-terminus: Diaminopimelate epimerase (286 aa).

Residues asparagine 12 and asparagine 67 each contribute to the substrate site. The active-site Proton donor is cysteine 76. Residues 77-78 (GN), asparagine 165, asparagine 198, and 216-217 (ER) contribute to the substrate site. Residue cysteine 225 is the Proton acceptor of the active site. Position 226 to 227 (226 to 227 (GT)) interacts with substrate.

The protein belongs to the diaminopimelate epimerase family. As to quaternary structure, homodimer.

Its subcellular location is the cytoplasm. It carries out the reaction (2S,6S)-2,6-diaminopimelate = meso-2,6-diaminopimelate. Its pathway is amino-acid biosynthesis; L-lysine biosynthesis via DAP pathway; DL-2,6-diaminopimelate from LL-2,6-diaminopimelate: step 1/1. In terms of biological role, catalyzes the stereoinversion of LL-2,6-diaminopimelate (L,L-DAP) to meso-diaminopimelate (meso-DAP), a precursor of L-lysine. The polypeptide is Diaminopimelate epimerase (Methanothermobacter thermautotrophicus (strain ATCC 29096 / DSM 1053 / JCM 10044 / NBRC 100330 / Delta H) (Methanobacterium thermoautotrophicum)).